A 943-amino-acid polypeptide reads, in one-letter code: Translation initiation factor IF-2 (943 aa).

The segment at 29 to 349 is disordered; sequence LSVKSHSSSV…NNRGNSAPKL (321 aa). Composition is skewed to basic and acidic residues over residues 69–82, 112–137, 145–155, 163–196, and 224–253; these read PKEE…DKAS, FKAE…DNRN, QGKRHNNDRRN, DHNK…RDNA, and RQSE…EKQQ. Residues 254–266 show a composition bias toward low complexity; sequence AEVAVQKAAAETK. The segment covering 296 to 309 has biased composition (basic and acidic residues); the sequence is KSRDNHRVNEDGPK. Residues 313–332 are compositionally biased toward low complexity; the sequence is NNKWNNQNQVRNQRNSNWNK. One can recognise a tr-type G domain in the interval 445-614; sequence ERAPVVTIMG…LLVAEVEELK (170 aa). Positions 454-461 are G1; it reads GHVDHGKT. 454 to 461 contributes to the GTP binding site; that stretch reads GHVDHGKT. The G2 stretch occupies residues 479–483; the sequence is GITQH. The G3 stretch occupies residues 500-503; it reads DTPG. GTP-binding positions include 500 to 504 and 554 to 557; these read DTPGH and NKID. A G4 region spans residues 554 to 557; sequence NKID. The G5 stretch occupies residues 590 to 592; it reads SAK.

It belongs to the TRAFAC class translation factor GTPase superfamily. Classic translation factor GTPase family. IF-2 subfamily.

Its subcellular location is the cytoplasm. One of the essential components for the initiation of protein synthesis. Protects formylmethionyl-tRNA from spontaneous hydrolysis and promotes its binding to the 30S ribosomal subunits. Also involved in the hydrolysis of GTP during the formation of the 70S ribosomal complex. In Streptococcus thermophilus (strain ATCC BAA-491 / LMD-9), this protein is Translation initiation factor IF-2.